Reading from the N-terminus, the 194-residue chain is Peptidyl-tRNA hydrolase (194 aa).

Tyr17 contacts tRNA. Residue His22 is the Proton acceptor of the active site. Residues Phe69, Asn71, and Asn117 each coordinate tRNA.

It belongs to the PTH family. Monomer.

The protein resides in the cytoplasm. The enzyme catalyses an N-acyl-L-alpha-aminoacyl-tRNA + H2O = an N-acyl-L-amino acid + a tRNA + H(+). Its function is as follows. Hydrolyzes ribosome-free peptidyl-tRNAs (with 1 or more amino acids incorporated), which drop off the ribosome during protein synthesis, or as a result of ribosome stalling. Catalyzes the release of premature peptidyl moieties from peptidyl-tRNA molecules trapped in stalled 50S ribosomal subunits, and thus maintains levels of free tRNAs and 50S ribosomes. The protein is Peptidyl-tRNA hydrolase of Renibacterium salmoninarum (strain ATCC 33209 / DSM 20767 / JCM 11484 / NBRC 15589 / NCIMB 2235).